We begin with the raw amino-acid sequence, 272 residues long: Dermonecrotic toxin LvSicTox-alphaIC1biv (272 aa).

Histidine 5 is a catalytic residue. Residues glutamate 25 and aspartate 27 each coordinate Mg(2+). Catalysis depends on histidine 41, which acts as the Nucleophile. 2 disulfides stabilise this stretch: cysteine 45–cysteine 51 and cysteine 47–cysteine 189. Aspartate 84 is a binding site for Mg(2+).

Belongs to the arthropod phospholipase D family. Class II subfamily. It depends on Mg(2+) as a cofactor. As to expression, expressed by the venom gland.

Its subcellular location is the secreted. The catalysed reaction is an N-(acyl)-sphingosylphosphocholine = an N-(acyl)-sphingosyl-1,3-cyclic phosphate + choline. It carries out the reaction an N-(acyl)-sphingosylphosphoethanolamine = an N-(acyl)-sphingosyl-1,3-cyclic phosphate + ethanolamine. It catalyses the reaction a 1-acyl-sn-glycero-3-phosphocholine = a 1-acyl-sn-glycero-2,3-cyclic phosphate + choline. The enzyme catalyses a 1-acyl-sn-glycero-3-phosphoethanolamine = a 1-acyl-sn-glycero-2,3-cyclic phosphate + ethanolamine. Its function is as follows. Dermonecrotic toxins cleave the phosphodiester linkage between the phosphate and headgroup of certain phospholipids (sphingolipid and lysolipid substrates), forming an alcohol (often choline) and a cyclic phosphate. This toxin acts on sphingomyelin (SM). It may also act on ceramide phosphoethanolamine (CPE), lysophosphatidylcholine (LPC) and lysophosphatidylethanolamine (LPE), but not on lysophosphatidylserine (LPS), and lysophosphatidylglycerol (LPG). It acts by transphosphatidylation, releasing exclusively cyclic phosphate products as second products. Induces dermonecrosis, hemolysis, increased vascular permeability, edema, inflammatory response, and platelet aggregation. The polypeptide is Dermonecrotic toxin LvSicTox-alphaIC1biv (Loxosceles variegata (Recluse spider)).